The following is a 490-amino-acid chain: GTPase Der (490 aa).

2 EngA-type G domains span residues 3–166 (PVVA…MEDL) and 203–376 (IKLA…DSST). GTP-binding positions include 9–16 (GRPNVGKS), 56–60 (DTGGI), 118–121 (NKTD), 209–216 (GRPNVGKS), 256–260 (DTAGV), and 321–324 (NKWD). The KH-like domain occupies 377–461 (RRVGTSMLTR…PIRIQFKEGE (85 aa)).

This sequence belongs to the TRAFAC class TrmE-Era-EngA-EngB-Septin-like GTPase superfamily. EngA (Der) GTPase family. Associates with the 50S ribosomal subunit.

In terms of biological role, GTPase that plays an essential role in the late steps of ribosome biogenesis. The sequence is that of GTPase Der from Escherichia coli O157:H7.